Consider the following 120-residue polypeptide: Ribosome-binding factor A (120 aa).

It belongs to the RbfA family. Monomer. Binds 30S ribosomal subunits, but not 50S ribosomal subunits or 70S ribosomes.

The protein localises to the cytoplasm. In terms of biological role, one of several proteins that assist in the late maturation steps of the functional core of the 30S ribosomal subunit. Associates with free 30S ribosomal subunits (but not with 30S subunits that are part of 70S ribosomes or polysomes). Required for efficient processing of 16S rRNA. May interact with the 5'-terminal helix region of 16S rRNA. This chain is Ribosome-binding factor A, found in Fusobacterium nucleatum subsp. nucleatum (strain ATCC 25586 / DSM 15643 / BCRC 10681 / CIP 101130 / JCM 8532 / KCTC 2640 / LMG 13131 / VPI 4355).